The primary structure comprises 279 residues: HTH-type transcriptional regulator HdfR (279 aa).

Residues 1–58 (MDTELLKTFLEVSRTRHFGRAAESLYLTQSAVSFRIRQLENQLGVNLFTRHRNNIRLT) form the HTH lysR-type domain. Residues 18-37 (FGRAAESLYLTQSAVSFRIR) constitute a DNA-binding region (H-T-H motif).

Belongs to the LysR transcriptional regulatory family.

Functionally, negatively regulates the transcription of the flagellar master operon flhDC by binding to the upstream region of the operon. In Escherichia fergusonii (strain ATCC 35469 / DSM 13698 / CCUG 18766 / IAM 14443 / JCM 21226 / LMG 7866 / NBRC 102419 / NCTC 12128 / CDC 0568-73), this protein is HTH-type transcriptional regulator HdfR.